The chain runs to 338 residues: DNA-directed RNA polymerase subunit alpha (338 aa).

Residues 1 to 234 are alpha N-terminal domain (alpha-NTD); the sequence is MIHKNWQELI…DQLSIFVNFD (234 aa). The segment at 250-338 is alpha C-terminal domain (alpha-CTD); sequence FNPLLLKKVD…ELAKKYEDNF (89 aa).

It belongs to the RNA polymerase alpha chain family. Homodimer. The RNAP catalytic core consists of 2 alpha, 1 beta, 1 beta' and 1 omega subunit. When a sigma factor is associated with the core the holoenzyme is formed, which can initiate transcription.

It catalyses the reaction RNA(n) + a ribonucleoside 5'-triphosphate = RNA(n+1) + diphosphate. Its function is as follows. DNA-dependent RNA polymerase catalyzes the transcription of DNA into RNA using the four ribonucleoside triphosphates as substrates. This is DNA-directed RNA polymerase subunit alpha from Jannaschia sp. (strain CCS1).